Consider the following 37-residue polypeptide: Bactericidin B-2 (37 aa).

A Glycine amide modification is found at glycine 37.

This sequence belongs to the cecropin family.

Its subcellular location is the secreted. In terms of biological role, cecropins have lytic and antibacterial activity against several Gram-positive and Gram-negative bacteria. The protein is Bactericidin B-2 of Manduca sexta (Tobacco hawkmoth).